A 748-amino-acid polypeptide reads, in one-letter code: Histone-lysine N-methyltransferase EZH2 (748 aa).

The segment covering 183-199 has biased composition (acidic residues); it reads DYEDDEDGEDNQDDERD. Disordered regions lie at residues 183-215 and 347-428; these read DYEDDEDGEDNQDDERDDITKDQDDNMEEKETL and TPPK…NIEP. The segment covering 200–215 has biased composition (basic and acidic residues); that stretch reads DITKDQDDNMEEKETL. A compositionally biased stretch (basic residues) spans 348 to 359; that stretch reads PPKRPSGRRRGR. Residues 376 to 387 are compositionally biased toward basic and acidic residues; sequence EAKDTDSDREAG. The CXC domain occupies 505–607; it reads CRKIQLKKDG…SKNVSCKNCS (103 aa). Positions 614–729 constitute an SET domain; it reads KHLLLAPSDV…TGEELFFDYR (116 aa).

This sequence belongs to the class V-like SAM-binding methyltransferase superfamily. Histone-lysine methyltransferase family. EZ subfamily. As to quaternary structure, component of the prc2/eed-ezh2 complex.

The protein localises to the nucleus. It catalyses the reaction L-lysyl(27)-[histone H3] + 3 S-adenosyl-L-methionine = N(6),N(6),N(6)-trimethyl-L-lysyl(27)-[histone H3] + 3 S-adenosyl-L-homocysteine + 3 H(+). In terms of biological role, polycomb group (PcG) protein. Catalytic subunit of the prc2/eed-ezh2 complex, which methylates 'Lys-9' and 'Lys-27' of histone H3, leading to transcriptional repression of the affected target gene. May regulate the circadian clock via histone methylation at the promoter of the circadian genes. This Xenopus laevis (African clawed frog) protein is Histone-lysine N-methyltransferase EZH2 (ezh2-b).